A 991-amino-acid polypeptide reads, in one-letter code: Valine--tRNA ligase (991 aa).

The short motif at 43–53 is the 'HIGH' region element; sequence PNVTGTLHMGH. The 'KMSKS' region motif lies at 582 to 586; sequence KMSKS. Lys-585 serves as a coordination point for ATP. The disordered stretch occupies residues 689–711; that stretch reads AHSPAQHQAGQDGQDAPRTPQPR. A compositionally biased stretch (low complexity) spans 693 to 704; the sequence is AQHQAGQDGQDA. A coiled-coil region spans residues 925–988; it reads LIDVDAERAR…TQLNGLRERR (64 aa).

The protein belongs to the class-I aminoacyl-tRNA synthetase family. ValS type 1 subfamily. In terms of assembly, monomer.

It is found in the cytoplasm. It carries out the reaction tRNA(Val) + L-valine + ATP = L-valyl-tRNA(Val) + AMP + diphosphate. In terms of biological role, catalyzes the attachment of valine to tRNA(Val). As ValRS can inadvertently accommodate and process structurally similar amino acids such as threonine, to avoid such errors, it has a 'posttransfer' editing activity that hydrolyzes mischarged Thr-tRNA(Val) in a tRNA-dependent manner. In Xylella fastidiosa (strain M12), this protein is Valine--tRNA ligase.